A 446-amino-acid polypeptide reads, in one-letter code: Tubulin beta-4 chain (446 aa).

GTP contacts are provided by Q11, E69, S138, G142, T143, G144, N204, and N226. E69 contributes to the Mg(2+) binding site. The span at 417–426 shows a compositional bias: polar residues; sequence DLVSEYQQYQ. Residues 417–446 form a disordered region; it reads DLVSEYQQYQDATADEEGDYEDEDEALHDE. A compositionally biased stretch (acidic residues) spans 429 to 446; that stretch reads TADEEGDYEDEDEALHDE.

Belongs to the tubulin family. As to quaternary structure, dimer of alpha and beta chains. A typical microtubule is a hollow water-filled tube with an outer diameter of 25 nm and an inner diameter of 15 nM. Alpha-beta heterodimers associate head-to-tail to form protofilaments running lengthwise along the microtubule wall with the beta-tubulin subunit facing the microtubule plus end conferring a structural polarity. Microtubules usually have 13 protofilaments but different protofilament numbers can be found in some organisms and specialized cells. Requires Mg(2+) as cofactor.

It localises to the cytoplasm. The protein resides in the cytoskeleton. Its function is as follows. Tubulin is the major constituent of microtubules, a cylinder consisting of laterally associated linear protofilaments composed of alpha- and beta-tubulin heterodimers. Microtubules grow by the addition of GTP-tubulin dimers to the microtubule end, where a stabilizing cap forms. Below the cap, tubulin dimers are in GDP-bound state, owing to GTPase activity of alpha-tubulin. The protein is Tubulin beta-4 chain (TUBB4) of Eleusine indica (Goosegrass).